An 819-amino-acid polypeptide reads, in one-letter code: Sulfate permease 2 (819 aa).

An N-linked (GlcNAc...) asparagine glycan is attached at Asn-24. 10 consecutive transmembrane segments (helical) span residues 72–92 (YNLT…FVVV), 104–124 (LAPE…WAFA), 129–149 (ITIG…ANVQ), 172–192 (LLFL…IVAI), 194–214 (AFMT…LMGI), 273–293 (FFVS…VSWL), 328–348 (ILSA…IEHI), 365–385 (SQEL…GGYP), 454–474 (FWLT…VSIF), and 477–497 (IENG…WRIA). An STAS domain is found at 551–708 (ELQISTPWPG…ENHKGGVQEV (158 aa)). Asn-581 carries an N-linked (GlcNAc...) asparagine glycan. The tract at residues 726–766 (EAVPVGTSGSGSTDEKRPEGEGGATNGGMEKGSANGEDIST) is disordered. Residues 746–755 (EGGATNGGME) show a composition bias toward gly residues.

The protein belongs to the SLC26A/SulP transporter (TC 2.A.53) family. As to expression, mainly found in mycelia.

Its subcellular location is the membrane. Uptake of sulfate into the cell. This is Sulfate permease 2 (cys-14) from Neurospora crassa (strain ATCC 24698 / 74-OR23-1A / CBS 708.71 / DSM 1257 / FGSC 987).